The primary structure comprises 229 residues: Large ribosomal subunit protein uL1 (229 aa).

This sequence belongs to the universal ribosomal protein uL1 family. As to quaternary structure, part of the 50S ribosomal subunit.

Its function is as follows. Binds directly to 23S rRNA. The L1 stalk is quite mobile in the ribosome, and is involved in E site tRNA release. In terms of biological role, protein L1 is also a translational repressor protein, it controls the translation of the L11 operon by binding to its mRNA. The sequence is that of Large ribosomal subunit protein uL1 from Streptococcus sanguinis (strain SK36).